The primary structure comprises 334 residues: UDP-N-acetylglucosamine 4,6-dehydratase (inverting) (334 aa).

NADP(+)-binding positions include 13 to 16, 37 to 42, 61 to 62, Ala81, Lys85, and 123 to 124; these read TGSF, SRDELK, DV, and LS. Residue Lys85 participates in substrate binding. Residue Lys127 is part of the active site. NADP(+)-binding residues include Tyr135 and Lys139. A substrate-binding site is contributed by Asn167. 168–172 is a binding site for NADP(+); it reads VVGSR. Positions 175, 193, 252, and 255 each coordinate substrate.

Belongs to the polysaccharide synthase family. In terms of assembly, homohexamer. It depends on NADP(+) as a cofactor.

It catalyses the reaction UDP-N-acetyl-alpha-D-glucosamine = UDP-2-acetamido-2,6-dideoxy-beta-L-arabino-hex-4-ulose + H2O. Functionally, catalyzes the first step in the biosynthesis of pseudaminic acid, a sialic-acid-like sugar that is used to modify flagellin. Has both C6 dehydratase and C5 epimerase activities that result in the production of both UDP-2-acetamido-2,6-dideoxy-beta-L-arabino-4-hexulose and UDP-2-acetamido-2,6-dideoxy-alpha-D-xylo-4-hexulose. This is UDP-N-acetylglucosamine 4,6-dehydratase (inverting) (pseB) from Campylobacter jejuni subsp. jejuni serotype O:2 (strain ATCC 700819 / NCTC 11168).